The following is a 277-amino-acid chain: S-formylglutathione hydrolase FrmB (277 aa).

Residues S145, D221, and H254 each act as charge relay system in the active site.

It belongs to the esterase D family.

The catalysed reaction is S-formylglutathione + H2O = formate + glutathione + H(+). Functionally, serine hydrolase involved in the detoxification of formaldehyde. Hydrolyzes S-formylglutathione to glutathione and formate. This is S-formylglutathione hydrolase FrmB (frmB) from Escherichia coli (strain K12 / DH10B).